Consider the following 152-residue polypeptide: Protein SprT-like (152 aa).

Positions 7-148 (QRLVEEVSLQ…GKCKGKLILI (142 aa)) constitute a SprT-like domain. Residue His-67 participates in Zn(2+) binding. Glu-68 is a catalytic residue. His-71 contributes to the Zn(2+) binding site.

This sequence belongs to the SprT family. Zn(2+) is required as a cofactor.

Its subcellular location is the cytoplasm. This is Protein SprT-like from Bacillus thuringiensis subsp. konkukian (strain 97-27).